The following is a 179-amino-acid chain: Large ribosomal subunit protein uL6 (179 aa).

This sequence belongs to the universal ribosomal protein uL6 family. Part of the 50S ribosomal subunit.

Functionally, this protein binds to the 23S rRNA, and is important in its secondary structure. It is located near the subunit interface in the base of the L7/L12 stalk, and near the tRNA binding site of the peptidyltransferase center. In Mycoplasmopsis pulmonis (strain UAB CTIP) (Mycoplasma pulmonis), this protein is Large ribosomal subunit protein uL6.